A 2051-amino-acid polypeptide reads, in one-letter code: MSFFYRSFANSLLPKQLLRFILARLDLLDSQALDLDNLNFALGRNTVLEFRDVGLILSKLEALTNLPPTFKIQKAKVLLLRITIPVDIYNSPIIVEVEGVDTRIRVASKQEQDEQTAKNKKGTHKDGDEVVPTAADLAQSFLQTEIPTDEQRRLEKALAEEAQEALSESMSDSETDDDGSFATFGTGQGLSLPTFLTNFLQGILDRLQIRIHKVTFQLDMQVPVEPGLSTIELVTFQLALDEVIAEGVTAPGQQKDGSPAIVPREGKRHILLDNLRAFLITEANVFSSLLPTQSAQSLVKPQGPAPHDVPSTLRDMSGSMQSSVGGLDMSISPDQMEALDMLAQSQYEVRDSEDALNIPYESDTQYPEAEENVAGSSPLSTPRASMYQEHDTPMLQDHANSAIMQHQPELWSSYERGIRSEPSLHPPTSFQPQTMPSGAVSPAPSEPSSSASSVRSDDDTPSADTEDLAQSHLYSHEEAESMYMSAFSDAHSTLMPGAYMPGGWGAESEGGESASERDLSTTHPVAGEPQSSTPVVSELASPTPIPEQNPTAQGYEPQHEDTSTPRGITRMVKEIVSLDSISVYVPSTRKQVLAPVTNLAKSNPNLPGAFSVHQSFHSSTTDQSTLLTPENLKEDRQDYAIEIVLKPLTLRFDSSVGFLLAMVVTRLLEAFKGSSDEGAEVKPSSTESILPDIKVCLEQVTMQFLEELTGVADSAKRIYETQKPNFGSDVLLEASLTNLNAFTHQSGSQTEVNVSIEKFAFGYADEAIVSFTGEADLFQSTATVDMLSVGKDIAVKATITPDVTRVDVKTLPLYLKLDLQRLDETFSWFGGLSGFLNMGASEDSVAKAVQIPAKPPQKTRGVRFETPIDPMEKRSGSKIDVRINGVHVDVIGKDCRAVLNTSALKLVHREEAIAAVLKTIRLSGPYVRNSHARAPVVLELDSTRLDYILTPRTRDLERLLELITPSKVKFDEDEDEIMVDTLLRQRRKGGVLGLEVKNFKVRAGNLALLDCIPSLVDDLAKLGTVAKYLPEDDRPGLLTLGQVTNVDCEVDVGGRFGVVNARLTNLELAQITVPSLVAVAVGVVTVNRNENSPIEEELVSTSTAHAPGSSKAPVLMMRMIDDIEPVLKIKLFGLNVDYRVPTIMDVLGLIQEETTPEEFEANLAASVANLGGQATAALRRQDTPESPVVDKEFKPIKLDVAFRDCVVGLNPLGQDSKLAIVLADSHLEAIPGKDSTLDATATLKKACILLIDDVKTLQDVQINARGRAPAMSTPQALELCSKGFVSICEMSSAKAVVKVGKDENGESHVEVSVRDDLLVLETCADSTQTLISLANALTPPTPPSKEIKYRTSVLPVEDLFASITPDAFGRAEGEYDFDDDFAGAQGIECGNEDDDDYYGIGSTEHLEIQSEGYGVAEELFDATNSSLLGDIEVENTNDGMLVSTANLDVPPVSSQSESDLDIQENYFSSEPVKNTTLRWNSRKNLYDQSSDAQVFKSPLVICVRDVHVIWNLYDGYDWVRTREIITKAVQDVEAKAYERKARADRHTYEDEGDEESVVDDCLFNSIYIAVGPNGDPSNLRRAINQELQYQDTTTETESVATTAFTTSTVRASGHRQSRPRGKTLKLSRSKNHKITFELKGVNIDVVTFPPGNETINTIDVRIHDLDVFDHIRTSTWKKFAMYDIDAGERELSKHMVHLEVLNVKPVPDLPATELVVKVNILPLRLHVDQDALDFITRFFEFKDETQPIHQSSSDVPFIQRCEVGDVPVRLDFKPKRVDYAGLRSGHTTEFMNFVILEDSRLVLRHVILYGVSGFDKLGKKLNDIWTADVKSTQLPGVLAGVAPVRSLVNAGSGFKDLIEIPIREYKKDGRIFRSIGKGATAFAKTTGTEVVKLGAKLAIGTQYALQGAEGMLAKNPPNYNHAGPSSSSAGVPAGVDYEVWDEEDFGDHHTPKAISLYADQPLGIMQGMRGAYASLSRDIAIARDAIIAVPTEVMESSSAQGAAKAVLMQAPTILFRPAIGVSKAIGQTLLGATNALDPNHRKRIEAKYKKH.

Residues 31–121 (QALDLDNLNF…QDEQTAKNKK (91 aa)) enclose the Chorein N-terminal domain. Basic and acidic residues predominate over residues 108-117 (SKQEQDEQTA). 6 disordered regions span residues 108–129 (SKQEQDEQTAKNKKGTHKDGDE), 152–179 (RRLEKALAEEAQEALSESMSDSETDDDG), 297–331 (SLVKPQGPAPHDVPSTLRDMSGSMQSSVGGLDMSI), 363–384 (DTQYPEAEENVAGSSPLSTPRA), 419–466 (RSEP…ADTE), and 501–564 (PGGW…DTST). Polar residues-rich tracts occupy residues 374–383 (AGSSPLSTPR) and 426–435 (PPTSFQPQTM). Residues 436-454 (PSGAVSPAPSEPSSSASSV) show a composition bias toward low complexity.

This sequence belongs to the ATG2 family.

The protein localises to the preautophagosomal structure membrane. It is found in the endoplasmic reticulum membrane. The catalysed reaction is a 1,2-diacyl-sn-glycero-3-phosphocholine(in) = a 1,2-diacyl-sn-glycero-3-phosphocholine(out). It catalyses the reaction a 1,2-diacyl-sn-glycero-3-phospho-L-serine(in) = a 1,2-diacyl-sn-glycero-3-phospho-L-serine(out). It carries out the reaction a 1,2-diacyl-sn-glycero-3-phosphoethanolamine(in) = a 1,2-diacyl-sn-glycero-3-phosphoethanolamine(out). Lipid transfer protein required for autophagosome completion and peroxisome degradation. Tethers the edge of the isolation membrane (IM) to the endoplasmic reticulum (ER) and mediates direct lipid transfer from ER to IM for IM expansion. Atg-2 binds to the ER exit site (ERES), which is the membrane source for autophagosome formation, using basic residues in its N-terminal region (NR) and to the expanding edge of the IM through its C-terminal region. The latter binding is assisted by an atg-18-PtdIns3P interaction. Atg-2 then extracts phospholipids from the membrane source using its NR and transfers them to atg-9 to the IM through its predicted beta-sheet-rich structure for membrane expansion. The polypeptide is Autophagy-related protein 2 (apg-2) (Neurospora crassa (strain ATCC 24698 / 74-OR23-1A / CBS 708.71 / DSM 1257 / FGSC 987)).